Here is a 135-residue protein sequence, read N- to C-terminus: Protein E6 (135 aa).

Zinc fingers lie at residues 11–47 (CIWC…CTSC) and 83–119 (CMYC…CYLC).

Belongs to the papillomaviridae E6 protein family. In terms of assembly, forms homodimers. Interacts with ubiquitin-protein ligase UBE3A/E6-AP; this interaction stimulates UBE3A ubiquitin activity. Interacts with host BAK1.

The protein localises to the host cytoplasm. It is found in the host nucleus. Functionally, plays a major role in the induction and maintenance of cellular transformation. E6 associates with host UBE3A/E6-AP ubiquitin-protein ligase and modulates its activity. Protects host keratinocytes from apoptosis by mediating the degradation of host BAK1. May also inhibit host immune response. The chain is Protein E6 from Cervus elaphus (Red deer).